Consider the following 362-residue polypeptide: Alpha-2-HS-glycoprotein (362 aa).

A signal peptide spans 1–15; sequence LILFFCLAQLWGCRA. The Cystatin fetuin-A-type 1 domain occupies 24-130; sequence YREPACDDVE…QFSVLFAKCD (107 aa). 6 cysteine pairs are disulfide-bonded: cysteine 29-cysteine 353, cysteine 86-cysteine 97, cysteine 111-cysteine 129, cysteine 143-cysteine 146, cysteine 205-cysteine 216, and cysteine 227-cysteine 244. Asparagine 96 is a glycosylation site (N-linked (GlcNAc...) asparagine). Residues serine 131, serine 132, and serine 135 each carry the phosphoserine modification. In terms of domain architecture, Cystatin fetuin-A-type 2 spans 141 to 252; sequence KVCPNCPLLA…TCTVFQTQPV (112 aa). N-linked (GlcNAc...) asparagine glycosylation is found at asparagine 153 and asparagine 173. Phosphoserine is present on residues serine 314, serine 318, serine 321, and serine 323. Threonine 332 is a glycosylation site (O-linked (GalNAc...) threonine).

The protein belongs to the fetuin family. Phosphorylated by FAM20C in the extracellular medium. Expressed by the liver and secreted in plasma.

The protein localises to the secreted. This chain is Alpha-2-HS-glycoprotein (AHSG), found in Sus scrofa (Pig).